A 414-amino-acid polypeptide reads, in one-letter code: Succinylornithine transaminase (414 aa).

At K260 the chain carries N6-(pyridoxal phosphate)lysine.

This sequence belongs to the class-III pyridoxal-phosphate-dependent aminotransferase family. AstC subfamily. Pyridoxal 5'-phosphate serves as cofactor.

The enzyme catalyses N(2)-succinyl-L-ornithine + 2-oxoglutarate = N-succinyl-L-glutamate 5-semialdehyde + L-glutamate. The protein operates within amino-acid degradation; L-arginine degradation via AST pathway; L-glutamate and succinate from L-arginine: step 3/5. In terms of biological role, catalyzes the transamination of N(2)-succinylornithine and alpha-ketoglutarate into N(2)-succinylglutamate semialdehyde and glutamate. Can also act as an acetylornithine aminotransferase. The chain is Succinylornithine transaminase from Yersinia pestis bv. Antiqua (strain Antiqua).